The primary structure comprises 441 residues: MRLSQYFLPLLKENPKEAEIISHRLMLRAGMIRQQTSGIYSWLPLGKKVLDKICKIIREEQERAGAIEILMPTIQSADLWRESDRYDDYGLEMLRIKDRQKRDLLYGPTNEEMVTDIFRSYIRSYKDLPLNLYHIQWKFRDEIRPRFGVMRSREFLMKDAYSFDLDYEGSKISYNRMFVAYLRTFSCLGLKAIPMRADTGPIGGKLSHEFIILAETGESAIFCDKHFLELTVPDSSIDFSDKAILANIVKQWTSFYAATEEMHDEEEWAKISDNNRLSARGIEVGHIFHFGTKYSAPMGAKVMGQDGKEHLVSMGSYGIGPSRLVAAVIEASHDENGIIWPKSIAPFDFGIINMKPDDEKCTHACETLYKGLRYAGFDPLLDDRNERPGSKFATMDLIGLPTQIIVGPKSVAQNEVEIKDRKTGIKKSLTVENVLNQFSVI.

The protein belongs to the class-II aminoacyl-tRNA synthetase family. ProS type 2 subfamily. In terms of assembly, homodimer.

The protein localises to the cytoplasm. The enzyme catalyses tRNA(Pro) + L-proline + ATP = L-prolyl-tRNA(Pro) + AMP + diphosphate. Functionally, catalyzes the attachment of proline to tRNA(Pro) in a two-step reaction: proline is first activated by ATP to form Pro-AMP and then transferred to the acceptor end of tRNA(Pro). This chain is Proline--tRNA ligase, found in Bartonella henselae (strain ATCC 49882 / DSM 28221 / CCUG 30454 / Houston 1) (Rochalimaea henselae).